Consider the following 316-residue polypeptide: Polyprenyl transferase ausN (316 aa).

Transmembrane regions (helical) follow at residues Val-45–Leu-65, Val-69–Ile-89, Gly-108–Ser-128, Leu-129–Leu-149, Leu-163–Pro-183, Ile-188–Tyr-208, Asp-233–Leu-253, Leu-256–Leu-276, and Ser-296–Leu-316.

It belongs to the UbiA prenyltransferase family. Mg(2+) is required as a cofactor.

The protein localises to the membrane. It carries out the reaction 3,5-dimethylorsellinate + (2E,6E)-farnesyl diphosphate = (3R)-3-farnesyl-6-hydroxy-2,3,5-trimethyl-4-oxocyclohexa-1,5-diene-1-carboxylate + diphosphate + H(+). The protein operates within secondary metabolite biosynthesis; terpenoid biosynthesis. Polyprenyl transferase; part of the gene cluster A that mediates the biosynthesis of the fungal meroterpenoid acetoxydehydroaustin. The first step of the pathway is the synthesis of 3,5-dimethylorsellinic acid by the polyketide synthase ausA. 3,5-dimethylorsellinic acid is then prenylated by the polyprenyl transferase ausN. Further epoxidation by the FAD-dependent monooxygenase ausM and cyclization by the probable terpene cyclase ausL lead to the formation of protoaustinoid A. Protoaustinoid A is then oxidized to spiro-lactone preaustinoid A3 by the combined action of the FAD-binding monooxygenases ausB and ausC, and the dioxygenase ausE. Acid-catalyzed keto-rearrangement and ring contraction of the tetraketide portion of preaustinoid A3 by ausJ lead to the formation of preaustinoid A4. The aldo-keto reductase ausK, with the help of ausH, is involved in the next step by transforming preaustinoid A4 into isoaustinone which is in turn hydroxylated by the P450 monooxygenase ausI to form austinolide. The cytochrome P450 monooxygenase ausG then modifies austinolide to austinol. Austinol is further acetylated to austin by the O-acetyltransferase ausP, which spontaneously changes to dehydroaustin. The cytochrome P450 monooxygenase then converts dehydroaustin is into 7-dehydrodehydroaustin. The hydroxylation catalyzed by ausR permits the second O-acetyltransferase ausQ to add an additional acetyl group to the molecule, leading to the formation of acetoxydehydroaustin. Due to genetic rearrangements of the clusters and the subsequent loss of some enzymes, the end product of the Penicillium brasilianum austinoid biosynthesis clusters is acetoxydehydroaustin. This is Polyprenyl transferase ausN from Penicillium brasilianum.